The sequence spans 849 residues: MAP7 domain-containing protein 1 (849 aa).

Disordered regions lie at residues 1-151 (MESG…REER) and 186-210 (EQRLKAEQRRAALEERQRQKLEKNK). Pro residues predominate over residues 24 to 41 (EPRPSPEGDPSPPPPPTP). Phosphothreonine occurs at positions 49 and 53. Phosphoserine is present on residues Ser72 and Ser95. At Thr99 the chain carries Phosphothreonine. Phosphoserine is present on residues Ser115 and Ser118. Residue Thr120 is modified to Phosphothreonine. Phosphoserine occurs at positions 125 and 127. Residues 132 to 151 (QDVKKAGERHKLAKERREER) are compositionally biased toward basic and acidic residues. The stretch at 167-223 (EKAKALREKQLQERRRRLEEQRLKAEQRRAALEERQRQKLEKNKERYEAAIQRSVKK) forms a coiled coil. Ser256, Ser275, Ser315, Ser368, and Ser401 each carry phosphoserine. The segment at 318 to 815 (TLPRNGRDQG…GFPAKGTAGD (498 aa)) is disordered. Residues 407–437 (RRLEATPVQKKEKKDKERENEKEKSALARER) are compositionally biased toward basic and acidic residues. 4 positions are modified to phosphoserine: Ser444, Ser448, Ser454, and Ser460. The segment covering 457–474 (AELSTKSKARPTSPSTTW) has biased composition (polar residues). A Glycyl lysine isopeptide (Lys-Gly) (interchain with G-Cter in SUMO2) cross-link involves residue Lys462. Phosphoserine is present on residues Ser479 and Ser496. The span at 479-497 (SPCPSPGPGHTLPPKPPSP) shows a compositional bias: pro residues. The span at 523–539 (PEDKNHSKSRTAEEKEP) shows a compositional bias: basic and acidic residues. Residues 542–556 (PASPAPSPVPSPTPA) show a composition bias toward pro residues. Residues Ser544, Ser548, and Ser552 each carry the phosphoserine modification. Residue Thr554 is modified to Phosphothreonine. Residues 568 to 582 (PPDTAVPAVPTVPTF) are compositionally biased toward low complexity. Residues 602-724 (TTDREEATRL…QERRKRLEEI (123 aa)) adopt a coiled-coil conformation. Residues 603 to 743 (TDREEATRLL…AETKKQDGKE (141 aa)) show a composition bias toward basic and acidic residues.

It belongs to the MAP7 family.

It localises to the cytoplasm. The protein localises to the cytoskeleton. The protein resides in the spindle. It is found in the microtubule organizing center. Its subcellular location is the centrosome. It localises to the midbody. Functionally, microtubule-stabilizing protein involved in the control of cell motility and neurite outgrowth. Facilitate microtubule stabilization through the maintenance of acetylated stable microtubules. The chain is MAP7 domain-containing protein 1 (Map7d1) from Rattus norvegicus (Rat).